Here is a 151-residue protein sequence, read N- to C-terminus: MNNLALQSLTESIAIKYFGKAFKHEVYYNKRLRTTGGRYILSSHNIEINPKQYEMFGEKAVIDIIKHELCHYFLHLAGEGYQHRDKAFKSLSAKVGAPRFCTPTESYQDRANYKYRCIYCEQEFIRIKRVNLEKMRCGRCGGILKLLQTRK.

The SprT-like domain maps to 7-146; that stretch reads QSLTESIAIK…CGRCGGILKL (140 aa). Zn(2+) is bound at residue His-67. The active site involves Glu-68. His-71 provides a ligand contact to Zn(2+).

Belongs to the SprT family. Zn(2+) is required as a cofactor.

Its subcellular location is the cytoplasm. This chain is Protein SprT-like, found in Staphylococcus epidermidis (strain ATCC 35984 / DSM 28319 / BCRC 17069 / CCUG 31568 / BM 3577 / RP62A).